We begin with the raw amino-acid sequence, 286 residues long: ATP synthase gamma chain (286 aa).

Belongs to the ATPase gamma chain family. In terms of assembly, F-type ATPases have 2 components, CF(1) - the catalytic core - and CF(0) - the membrane proton channel. CF(1) has five subunits: alpha(3), beta(3), gamma(1), delta(1), epsilon(1). CF(0) has three main subunits: a, b and c.

The protein resides in the cell inner membrane. In terms of biological role, produces ATP from ADP in the presence of a proton gradient across the membrane. The gamma chain is believed to be important in regulating ATPase activity and the flow of protons through the CF(0) complex. The polypeptide is ATP synthase gamma chain (Pseudomonas syringae pv. tomato (strain ATCC BAA-871 / DC3000)).